The chain runs to 407 residues: Na(+)-translocating NADH-quinone reductase subunit F (407 aa).

The helical transmembrane segment at 6-26 (IFLAIGMFTAIVLGLVAIILV) threads the bilayer. One can recognise a 2Fe-2S ferredoxin-type domain in the interval 35-127 (GDVTIQINGE…DMQIRVPEEV (93 aa)). 4 residues coordinate [2Fe-2S] cluster: Cys70, Cys76, Cys79, and Cys111. One can recognise an FAD-binding FR-type domain in the interval 130–269 (VKKWECTVES…YGPFGEFFAK (140 aa)).

The protein belongs to the NqrF family. As to quaternary structure, composed of six subunits; NqrA, NqrB, NqrC, NqrD, NqrE and NqrF. [2Fe-2S] cluster is required as a cofactor. Requires FAD as cofactor.

It is found in the cell inner membrane. It carries out the reaction a ubiquinone + n Na(+)(in) + NADH + H(+) = a ubiquinol + n Na(+)(out) + NAD(+). Functionally, NQR complex catalyzes the reduction of ubiquinone-1 to ubiquinol by two successive reactions, coupled with the transport of Na(+) ions from the cytoplasm to the periplasm. The first step is catalyzed by NqrF, which accepts electrons from NADH and reduces ubiquinone-1 to ubisemiquinone by a one-electron transfer pathway. The polypeptide is Na(+)-translocating NADH-quinone reductase subunit F (Pseudomonas paraeruginosa (strain DSM 24068 / PA7) (Pseudomonas aeruginosa (strain PA7))).